We begin with the raw amino-acid sequence, 272 residues long: Glutamate racemase (272 aa).

Residues 9–10 (DS) and 41–42 (YG) contribute to the substrate site. The active-site Proton donor/acceptor is cysteine 73. 74-75 (NT) serves as a coordination point for substrate. Cysteine 183 serves as the catalytic Proton donor/acceptor. 184–185 (TH) lines the substrate pocket.

It belongs to the aspartate/glutamate racemases family.

The catalysed reaction is L-glutamate = D-glutamate. It participates in cell wall biogenesis; peptidoglycan biosynthesis. Functionally, provides the (R)-glutamate required for cell wall biosynthesis. The sequence is that of Glutamate racemase from Shewanella sp. (strain MR-4).